The primary structure comprises 542 residues: Protein DETOXIFICATION 34 (542 aa).

12 helical membrane-spanning segments follow: residues alanine 97–valine 117, alanine 127–alanine 147, isoleucine 176–isoleucine 196, isoleucine 204–isoleucine 224, isoleucine 240–isoleucine 260, alanine 272–tryptophan 292, phenylalanine 316–threonine 336, isoleucine 344–isoleucine 364, valine 390–isoleucine 410, leucine 435–glycine 455, valine 462–glycine 482, and glycine 491–isoleucine 511.

This sequence belongs to the multi antimicrobial extrusion (MATE) (TC 2.A.66.1) family.

The protein localises to the membrane. This is Protein DETOXIFICATION 34 from Arabidopsis thaliana (Mouse-ear cress).